The sequence spans 488 residues: Ribulose bisphosphate carboxylase large chain 1 (488 aa).

Asparagine 127 and threonine 177 together coordinate substrate. The Proton acceptor role is filled by lysine 179. A substrate-binding site is contributed by lysine 181. Residues lysine 205, aspartate 207, and glutamate 208 each contribute to the Mg(2+) site. Residue lysine 205 is modified to N6-carboxylysine. The Proton acceptor role is filled by histidine 297. Residues arginine 298, histidine 330, and serine 382 each contribute to the substrate site.

Belongs to the RuBisCO large chain family. Type I subfamily. In terms of assembly, heterohexadecamer of 8 large chains and 8 small chains. Requires Mg(2+) as cofactor.

It catalyses the reaction 2 (2R)-3-phosphoglycerate + 2 H(+) = D-ribulose 1,5-bisphosphate + CO2 + H2O. The catalysed reaction is D-ribulose 1,5-bisphosphate + O2 = 2-phosphoglycolate + (2R)-3-phosphoglycerate + 2 H(+). RuBisCO catalyzes two reactions: the carboxylation of D-ribulose 1,5-bisphosphate, the primary event in carbon dioxide fixation, as well as the oxidative fragmentation of the pentose substrate. Both reactions occur simultaneously and in competition at the same active site. The polypeptide is Ribulose bisphosphate carboxylase large chain 1 (Bradyrhizobium sp. (strain BTAi1 / ATCC BAA-1182)).